We begin with the raw amino-acid sequence, 287 residues long: mRNA-capping enzyme small subunit (287 aa).

As to quaternary structure, heterodimer of a large and a small subunit.

It localises to the virion. It carries out the reaction a 5'-end (5'-triphosphoguanosine)-ribonucleoside in mRNA + S-adenosyl-L-methionine = a 5'-end (N(7)-methyl 5'-triphosphoguanosine)-ribonucleoside in mRNA + S-adenosyl-L-homocysteine. Catalyzes the last reaction in the mRNA cap formation pathway. This Sus scrofa (Pig) protein is mRNA-capping enzyme small subunit.